A 482-amino-acid polypeptide reads, in one-letter code: Anthranilate synthase component 1 (482 aa).

Residues Ser-47 and 267–269 (PYM) each bind L-tryptophan. 302-303 (GT) lines the chorismate pocket. Glu-329 is a Mg(2+) binding site. Residues Tyr-417, Arg-437, 451–453 (GGG), and Gly-453 each bind chorismate. Glu-466 is a Mg(2+) binding site.

The protein belongs to the anthranilate synthase component I family. In terms of assembly, heterotetramer consisting of two non-identical subunits: a beta subunit (TrpG) and a large alpha subunit (TrpE). Mg(2+) is required as a cofactor.

The enzyme catalyses chorismate + L-glutamine = anthranilate + pyruvate + L-glutamate + H(+). It functions in the pathway amino-acid biosynthesis; L-tryptophan biosynthesis; L-tryptophan from chorismate: step 1/5. Feedback inhibited by tryptophan. Part of a heterotetrameric complex that catalyzes the two-step biosynthesis of anthranilate, an intermediate in the biosynthesis of L-tryptophan. In the first step, the glutamine-binding beta subunit (TrpG) of anthranilate synthase (AS) provides the glutamine amidotransferase activity which generates ammonia as a substrate that, along with chorismate, is used in the second step, catalyzed by the large alpha subunit of AS (TrpE) to produce anthranilate. In the absence of TrpG, TrpE can synthesize anthranilate directly from chorismate and high concentrations of ammonia. This is Anthranilate synthase component 1 (trpE) from Spirochaeta aurantia.